The sequence spans 699 residues: Elongation factor G (699 aa).

The tr-type G domain occupies 8–283 (EHIRNIGICA…AVVDFLPSPI (276 aa)). Residues 17–24 (AHIDAGKT), 81–85 (DTPGH), and 135–138 (NKMD) contribute to the GTP site.

Belongs to the TRAFAC class translation factor GTPase superfamily. Classic translation factor GTPase family. EF-G/EF-2 subfamily.

It is found in the cytoplasm. In terms of biological role, catalyzes the GTP-dependent ribosomal translocation step during translation elongation. During this step, the ribosome changes from the pre-translocational (PRE) to the post-translocational (POST) state as the newly formed A-site-bound peptidyl-tRNA and P-site-bound deacylated tRNA move to the P and E sites, respectively. Catalyzes the coordinated movement of the two tRNA molecules, the mRNA and conformational changes in the ribosome. The chain is Elongation factor G from Rickettsia peacockii (strain Rustic).